The chain runs to 546 residues: MAAKQVLFGDDARVRIVRGVNVLANAVKTTLGPKGRNVVLERSFGAPTVTKDGVSVAKEIELKDKFENIGAQLVKDVASKTSDNAGDGTTTATVLAQAIVQEGLKYVAAGFNPIDLKRGIDKAVSAAVAELAKQSKPVTTSKEIAQVGSISANSDESIGKIIADAMDKVGKEGVITVEDGKSLDNELDVVEGMQFDRGYLSPYFINNPDKQVAALDDPYVLIFDKKISNIRDLLPVLEQVAKSSRPLLIIAEDVEGEALATLVVNNIRGILKTTAVKAPGFGDRRKAMLEDIAILTGGVVISEETGMSLEKATLQELGQAKRIEVGKENTTIIDGAGDSKSIEARVKQIRVQIEEATSDYDREKLQERVAKLAGGVAVIRVGAATEVEMKEKKARVEDALHATRAAVEEGVVAGGGVALLRAKQAIADLKGDTADQNAGIKLILRAVEEPLRTIVTNAGEEASVVVNNVLNGKGNYGYNAATGEYTDLVEQGVLDPTKVTRTALQNAASVASLLLTAEAAVVELSEDKPAAPPMPGGMGGMGGMDF.

Residues Thr30–Pro33, Lys51, Asp87–Thr91, Gly415, Asn479–Ala481, and Asp495 each bind ATP. The interval Asp527–Phe546 is disordered. The segment covering Gly536–Phe546 has biased composition (gly residues).

The protein belongs to the chaperonin (HSP60) family. As to quaternary structure, forms a cylinder of 14 subunits composed of two heptameric rings stacked back-to-back. Interacts with the co-chaperonin GroES.

It is found in the cytoplasm. It carries out the reaction ATP + H2O + a folded polypeptide = ADP + phosphate + an unfolded polypeptide.. Together with its co-chaperonin GroES, plays an essential role in assisting protein folding. The GroEL-GroES system forms a nano-cage that allows encapsulation of the non-native substrate proteins and provides a physical environment optimized to promote and accelerate protein folding. This Bordetella petrii (strain ATCC BAA-461 / DSM 12804 / CCUG 43448) protein is Chaperonin GroEL.